The primary structure comprises 258 residues: Global transcriptional regulator CodY (258 aa).

Residues 1–156 (MSSLLTKTRM…SATIVGMEML (156 aa)) are GAF domain. Residues 204–223 (ASKIADKVGITRSVIVNALR) constitute a DNA-binding region (H-T-H motif).

Belongs to the CodY family.

Its subcellular location is the cytoplasm. Functionally, DNA-binding global transcriptional regulator which is involved in the adaptive response to starvation and acts by directly or indirectly controlling the expression of numerous genes in response to nutrient availability. During rapid exponential growth, CodY is highly active and represses genes whose products allow adaptation to nutrient depletion. The chain is Global transcriptional regulator CodY from Clostridium beijerinckii (strain ATCC 51743 / NCIMB 8052) (Clostridium acetobutylicum).